The sequence spans 375 residues: Eukaryotic translation initiation factor 3 subunit M (375 aa).

One can recognise a PCI domain in the interval 180–339 (AAAKVMVELL…RKVVVSHSTH (160 aa)).

Belongs to the eIF-3 subunit M family. Component of the eukaryotic translation initiation factor 3 (eIF-3) complex, which is composed of 13 subunits: eif3a, eif3b, eif3c, eif3d, eif3e, eif3f, eif3g, eif3h, eif3i, eif3j, eif3k, eif3l and eif3m.

The protein localises to the cytoplasm. Functionally, component of the eukaryotic translation initiation factor 3 (eIF-3) complex, which is involved in protein synthesis of a specialized repertoire of mRNAs and, together with other initiation factors, stimulates binding of mRNA and methionyl-tRNAi to the 40S ribosome. The eIF-3 complex specifically targets and initiates translation of a subset of mRNAs involved in cell proliferation. The sequence is that of Eukaryotic translation initiation factor 3 subunit M (eif3m) from Danio rerio (Zebrafish).